The following is a 426-amino-acid chain: MLRVQQAKQIKGTVRVPGDKSISHRAVMFGALAEGTTTIEGFLPGADCLSTISCFRRMGIEIEQQGDAVTVQGKGWYGLQEPSQHLDVGNSGTTIRLMAGIMATQPFHVVMEGDESIAKRPMRRVIGPLRQMGAKIDGRKDGEYTPLSIRGGKLQGIAYQSPVASAQVKSAIMLAGLQAKGVTSVTEPHLSRDHTERMLQAFGVQVVRDGLTVSVEGGQKLKGRAISVPGDISSAAFLIAAVMVVPGSSLLIENVGINPSRTGIIDVVKAMGGSLELLNERIVNEEPVADLLVTHSELHGIEIAGDIIPRLIDEIPVIAVMATQAKGQTVIRDAEELKVKETDRIATVVSQLSKFGAKVTPTDDGMIIGGKTGLTGAIIDSMGDHRIGMAMAIAGLIAEGETKIENDEAIDVSFPGFHDLLVKISQ.

3-phosphoshikimate contacts are provided by K20, S21, and R25. K20 provides a ligand contact to phosphoenolpyruvate. Phosphoenolpyruvate is bound by residues G92 and R120. 3-phosphoshikimate is bound by residues S165, Q167, D313, and K340. A phosphoenolpyruvate-binding site is contributed by Q167. D313 (proton acceptor) is an active-site residue. R344 and R386 together coordinate phosphoenolpyruvate.

It belongs to the EPSP synthase family. Monomer.

The protein localises to the cytoplasm. It carries out the reaction 3-phosphoshikimate + phosphoenolpyruvate = 5-O-(1-carboxyvinyl)-3-phosphoshikimate + phosphate. It functions in the pathway metabolic intermediate biosynthesis; chorismate biosynthesis; chorismate from D-erythrose 4-phosphate and phosphoenolpyruvate: step 6/7. In terms of biological role, catalyzes the transfer of the enolpyruvyl moiety of phosphoenolpyruvate (PEP) to the 5-hydroxyl of shikimate-3-phosphate (S3P) to produce enolpyruvyl shikimate-3-phosphate and inorganic phosphate. This is 3-phosphoshikimate 1-carboxyvinyltransferase from Brevibacillus brevis (strain 47 / JCM 6285 / NBRC 100599).